Consider the following 95-residue polypeptide: Large ribosomal subunit protein uL23 (95 aa).

This sequence belongs to the universal ribosomal protein uL23 family. Part of the 50S ribosomal subunit. Contacts protein L29, and trigger factor when it is bound to the ribosome.

One of the early assembly proteins it binds 23S rRNA. One of the proteins that surrounds the polypeptide exit tunnel on the outside of the ribosome. Forms the main docking site for trigger factor binding to the ribosome. The sequence is that of Large ribosomal subunit protein uL23 from Desulfitobacterium hafniense (strain DSM 10664 / DCB-2).